We begin with the raw amino-acid sequence, 386 residues long: Diaminopimelate decarboxylase (386 aa).

K49 carries the N6-(pyridoxal phosphate)lysine modification. Pyridoxal 5'-phosphate-binding positions include G228 and 266 to 269 (ELGR). Substrate contacts are provided by R269, R305, Y309, E335, and Y363. Y363 serves as a coordination point for pyridoxal 5'-phosphate.

This sequence belongs to the Orn/Lys/Arg decarboxylase class-II family. LysA subfamily. In terms of assembly, homodimer. Pyridoxal 5'-phosphate serves as cofactor.

It carries out the reaction meso-2,6-diaminopimelate + H(+) = L-lysine + CO2. The protein operates within amino-acid biosynthesis; L-lysine biosynthesis via DAP pathway; L-lysine from DL-2,6-diaminopimelate: step 1/1. Specifically catalyzes the decarboxylation of meso-diaminopimelate (meso-DAP) to L-lysine. The chain is Diaminopimelate decarboxylase from Bacteroides thetaiotaomicron (strain ATCC 29148 / DSM 2079 / JCM 5827 / CCUG 10774 / NCTC 10582 / VPI-5482 / E50).